We begin with the raw amino-acid sequence, 245 residues long: Pre-hexon-linking protein VIII (245 aa).

Positions 116-167 (LMVGRTEGRMQLAGGLTEGRVQLSGGFHGRPLVRGRSRRPPRWCGAELTGNG) are excised as a propeptide.

It belongs to the adenoviridae hexon-linking protein family. In terms of assembly, interacts with the peripentonal hexons as well as the hexons in the facets. Part of a complex composed of the core-capsid bridging protein, the endosome lysis protein VI and the hexon-linking protein VIII; these interactions bridge the virus core to the capsid. Cleaved by the viral protease during virion maturation. May cause the middle segment to be shed from the capsid.

Its subcellular location is the virion. The protein resides in the host nucleus. Structural component of the virion that acts as a cement protein on the capsid interior and which glue the peripentonal hexons and group-of-nine hexons together. This chain is Pre-hexon-linking protein VIII, found in Galliformes (FAdV-1).